The sequence spans 123 residues: Methylmalonyl-CoA carboxyltransferase 1.3S subunit (123 aa).

Residues 46 to 123 form the Biotinyl-binding domain; the sequence is GAGAGKAGEG…QGGQGLIKIG (78 aa). The residue at position 89 (Lys89) is an N6-biotinyllysine.

Transcarboxylase is composed of three subunits: 1.3S, 5S, and 12S. The core of the enzyme is composed of six 12S subunits. On each side of the core there are three pairs of 5S subunits. Each 5S dimer is attached to the core by two 1.3S subunits. Thus the total number of chains is 30 (6 + 12 + 12).

It carries out the reaction (S)-methylmalonyl-CoA + pyruvate = propanoyl-CoA + oxaloacetate. Functionally, the biotinyl 1.3S subunit serves as a carboxyl carrier between the substrate-binding sites on the 12S and 5S subunits. The chain is Methylmalonyl-CoA carboxyltransferase 1.3S subunit from Propionibacterium freudenreichii subsp. shermanii.